The primary structure comprises 602 residues: GTP-binding protein 2 (602 aa).

The tract at residues 16–64 is disordered; the sequence is GGGPAVGGTLKARGAGSSSGCGGPKGKKKNGRNRGGKANNPPYLPPEAE. The span at 40 to 50 shows a compositional bias: basic residues; it reads KGKKKNGRNRG. Residues 170 to 398 form the tr-type G domain; it reads FLDLRVAVLG…LNILPPLTNS (229 aa). GTP is bound by residues 179–186, 260–264, and 316–319; these read GNVDSGKS, DLAGH, and SKID.

It belongs to the TRAFAC class translation factor GTPase superfamily. Classic translation factor GTPase family. GTPBP1 subfamily. In terms of tissue distribution, predominantly expressed in thymus, spleen, and testis. Expressed at lower levels in brain, lung, kidney, and ovary.

This is GTP-binding protein 2 from Homo sapiens (Human).